Consider the following 266-residue polypeptide: 3-methyl-2-oxobutanoate hydroxymethyltransferase (266 aa).

2 residues coordinate Mg(2+): Asp-45 and Asp-84. 3-methyl-2-oxobutanoate is bound by residues 45–46, Asp-84, and Lys-112; that span reads DS. A Mg(2+)-binding site is contributed by Glu-114. The active-site Proton acceptor is the Glu-181.

It belongs to the PanB family. In terms of assembly, homodecamer; pentamer of dimers. Mg(2+) serves as cofactor.

The protein resides in the cytoplasm. The catalysed reaction is 3-methyl-2-oxobutanoate + (6R)-5,10-methylene-5,6,7,8-tetrahydrofolate + H2O = 2-dehydropantoate + (6S)-5,6,7,8-tetrahydrofolate. It functions in the pathway cofactor biosynthesis; (R)-pantothenate biosynthesis; (R)-pantoate from 3-methyl-2-oxobutanoate: step 1/2. Catalyzes the reversible reaction in which hydroxymethyl group from 5,10-methylenetetrahydrofolate is transferred onto alpha-ketoisovalerate to form ketopantoate. The sequence is that of 3-methyl-2-oxobutanoate hydroxymethyltransferase from Stutzerimonas stutzeri (strain A1501) (Pseudomonas stutzeri).